Reading from the N-terminus, the 69-residue chain is UPF0270 protein VCM66_2532 (69 aa).

The protein belongs to the UPF0270 family.

The protein is UPF0270 protein VCM66_2532 of Vibrio cholerae serotype O1 (strain M66-2).